A 142-amino-acid polypeptide reads, in one-letter code: Ribosome maturation factor RimP (142 aa).

Belongs to the RimP family.

It localises to the cytoplasm. In terms of biological role, required for maturation of 30S ribosomal subunits. In Aromatoleum aromaticum (strain DSM 19018 / LMG 30748 / EbN1) (Azoarcus sp. (strain EbN1)), this protein is Ribosome maturation factor RimP.